Consider the following 169-residue polypeptide: Ribosome maturation factor RimM (169 aa).

Positions Asp-94–Leu-168 constitute a PRC barrel domain.

This sequence belongs to the RimM family. As to quaternary structure, binds ribosomal protein uS19.

It localises to the cytoplasm. Its function is as follows. An accessory protein needed during the final step in the assembly of 30S ribosomal subunit, possibly for assembly of the head region. Essential for efficient processing of 16S rRNA. May be needed both before and after RbfA during the maturation of 16S rRNA. It has affinity for free ribosomal 30S subunits but not for 70S ribosomes. The polypeptide is Ribosome maturation factor RimM (Cereibacter sphaeroides (strain ATCC 17029 / ATH 2.4.9) (Rhodobacter sphaeroides)).